We begin with the raw amino-acid sequence, 404 residues long: BRCA1-A complex subunit Abraxas 1 (404 aa).

The region spanning 7 to 161 is the MPN domain; sequence YIRVSGFVLG…YAVYRSHGSQ (155 aa). Residues 219-268 adopt a coiled-coil conformation; sequence MNNSLQGELKMACKKVEESERLVEKLLADVSDLRRMVNERKQELREISAD. The interval 339–404 is disordered; the sequence is GRLGRGGGTS…NLDVSNSPVF (66 aa). Residues 391–404 are compositionally biased toward polar residues; sequence RNGNNLDVSNSPVF. Ser-401 is subject to Phosphoserine. Residues 401 to 404 carry the pSXXF motif motif; it reads SPVF.

The protein belongs to the FAM175 family. Abraxas subfamily. As to quaternary structure, component of the BRCA1-A complex. Component of the BRISC complex. Homodimer. Interacts directly (when phosphorylated at Ser-401) with brca1. The phosphorylated homodimer can interact directly with two brca1 chains, giving rise to a heterotetramer. In terms of processing, phosphorylation of Ser-401 of the pSXXF motif by ATM or ATR constitutes a specific recognition motif for the BRCT domain of BRCA1.

Its subcellular location is the nucleus. Functionally, involved in DNA damage response and double-strand break (DSB) repair. Component of the BRCA1-A complex, acting as a central scaffold protein that assembles the various components of the complex and mediates the recruitment of brca1. The BRCA1-A complex specifically recognizes 'Lys-63'-linked ubiquitinated histones H2A and H2AX at DNA lesion sites, leading to target the brca1-bard1 heterodimer to sites of DNA damage at DSBs. This complex also possesses deubiquitinase activity that specifically removes 'Lys-63'-linked ubiquitin on histones H2A and H2AX. The chain is BRCA1-A complex subunit Abraxas 1 from Salmo salar (Atlantic salmon).